We begin with the raw amino-acid sequence, 438 residues long: Adenylosuccinate synthetase (438 aa).

GTP-binding positions include 12–18 and 40–42; these read GDEGKGK and GHT. The active-site Proton acceptor is Asp13. Residues Asp13 and Gly40 each coordinate Mg(2+). IMP contacts are provided by residues 13–16, 38–41, Thr128, Arg142, Gln223, Thr238, and Arg302; these read DEGK and NAGH. The active-site Proton donor is the His41. 298–304 lines the substrate pocket; the sequence is TTTGRPR. GTP is bound by residues Arg304, 330-332, and 412-414; these read KLD and GVG.

The protein belongs to the adenylosuccinate synthetase family. In terms of assembly, homodimer. It depends on Mg(2+) as a cofactor.

It is found in the cytoplasm. The enzyme catalyses IMP + L-aspartate + GTP = N(6)-(1,2-dicarboxyethyl)-AMP + GDP + phosphate + 2 H(+). Its pathway is purine metabolism; AMP biosynthesis via de novo pathway; AMP from IMP: step 1/2. Its function is as follows. Plays an important role in the de novo pathway of purine nucleotide biosynthesis. Catalyzes the first committed step in the biosynthesis of AMP from IMP. In Leifsonia xyli subsp. xyli (strain CTCB07), this protein is Adenylosuccinate synthetase.